We begin with the raw amino-acid sequence, 339 residues long: Uroporphyrinogen decarboxylase (339 aa).

Substrate contacts are provided by residues 21 to 25 (RQAGR), Asp-71, Tyr-147, Ser-202, and His-315.

The protein belongs to the uroporphyrinogen decarboxylase family. In terms of assembly, homodimer.

The protein localises to the cytoplasm. It carries out the reaction uroporphyrinogen III + 4 H(+) = coproporphyrinogen III + 4 CO2. It participates in porphyrin-containing compound metabolism; protoporphyrin-IX biosynthesis; coproporphyrinogen-III from 5-aminolevulinate: step 4/4. Its function is as follows. Catalyzes the decarboxylation of four acetate groups of uroporphyrinogen-III to yield coproporphyrinogen-III. In Helicobacter pylori (strain G27), this protein is Uroporphyrinogen decarboxylase.